Reading from the N-terminus, the 705-residue chain is Elongation factor G (705 aa).

The tr-type G domain occupies 7–287; sequence HLTRNIGIMA…YVCAFLPSPL (281 aa). Residues 16–23, 84–88, and 138–141 contribute to the GTP site; these read AHIDAGKT, DTPGH, and NKMD.

Belongs to the TRAFAC class translation factor GTPase superfamily. Classic translation factor GTPase family. EF-G/EF-2 subfamily.

It is found in the cytoplasm. Functionally, catalyzes the GTP-dependent ribosomal translocation step during translation elongation. During this step, the ribosome changes from the pre-translocational (PRE) to the post-translocational (POST) state as the newly formed A-site-bound peptidyl-tRNA and P-site-bound deacylated tRNA move to the P and E sites, respectively. Catalyzes the coordinated movement of the two tRNA molecules, the mRNA and conformational changes in the ribosome. This chain is Elongation factor G, found in Bacteroides thetaiotaomicron (strain ATCC 29148 / DSM 2079 / JCM 5827 / CCUG 10774 / NCTC 10582 / VPI-5482 / E50).